A 485-amino-acid chain; its full sequence is Argininosuccinate lyase (485 aa).

The protein belongs to the lyase 1 family. Argininosuccinate lyase subfamily.

The protein resides in the cytoplasm. It carries out the reaction 2-(N(omega)-L-arginino)succinate = fumarate + L-arginine. It functions in the pathway amino-acid biosynthesis; L-arginine biosynthesis; L-arginine from L-ornithine and carbamoyl phosphate: step 3/3. This Halobacterium salinarum (strain ATCC 29341 / DSM 671 / R1) protein is Argininosuccinate lyase.